The following is a 527-amino-acid chain: Laccase-5 (527 aa).

Residues 1–23 form the signal peptide; the sequence is MGKYHSFVNVVALSLSLSGRVFG. Residues 25–150 form the Plastocyanin-like 1 domain; sequence IGPVTDLTIS…DGLRGPLVVY (126 aa). 2 N-linked (GlcNAc...) asparagine glycosylation sites follow: N74 and N77. The Cu cation site is built by H87, H89, H132, and H134. Disulfide bonds link C108/C516 and C140/C230. N-linked (GlcNAc...) asparagine glycans are attached at residues N156, N209, N233, N242, N276, N317, N358, N366, N393, and N402. The 145-residue stretch at 162 to 306 folds into the Plastocyanin-like 2 domain; sequence VDDDTTVITL…GGVNSAILRY (145 aa). The Plastocyanin-like 3 domain occupies 373–498; that stretch reads TVPVLLQILS…AGFAIVWGED (126 aa). Cu cation-binding residues include H425, H428, H430, H480, C481, H482, and H486.

Belongs to the multicopper oxidase family. In terms of assembly, homodimer. It depends on Cu cation as a cofactor.

Its subcellular location is the secreted. It catalyses the reaction 4 hydroquinone + O2 = 4 benzosemiquinone + 2 H2O. In terms of biological role, lignin degradation and detoxification of lignin-derived products. The polypeptide is Laccase-5 (LCC5) (Trametes villosa (White-rot fungus)).